Consider the following 482-residue polypeptide: Probable cytosol aminopeptidase (482 aa).

The Mn(2+) site is built by Lys251 and Asp256. The active site involves Lys263. Residues Asp274, Asp333, and Glu335 each contribute to the Mn(2+) site. Arg337 is an active-site residue.

This sequence belongs to the peptidase M17 family. Mn(2+) serves as cofactor.

It localises to the cytoplasm. The enzyme catalyses Release of an N-terminal amino acid, Xaa-|-Yaa-, in which Xaa is preferably Leu, but may be other amino acids including Pro although not Arg or Lys, and Yaa may be Pro. Amino acid amides and methyl esters are also readily hydrolyzed, but rates on arylamides are exceedingly low.. It carries out the reaction Release of an N-terminal amino acid, preferentially leucine, but not glutamic or aspartic acids.. In terms of biological role, presumably involved in the processing and regular turnover of intracellular proteins. Catalyzes the removal of unsubstituted N-terminal amino acids from various peptides. The polypeptide is Probable cytosol aminopeptidase (Acinetobacter baumannii (strain AB307-0294)).